The chain runs to 227 residues: Thymidylate kinase (227 aa).

ATP is bound at residue 16-23 (GIDGAGKT).

It belongs to the thymidylate kinase family.

The catalysed reaction is dTMP + ATP = dTDP + ADP. In terms of biological role, phosphorylation of dTMP to form dTDP in both de novo and salvage pathways of dTTP synthesis. The chain is Thymidylate kinase from Xanthomonas oryzae pv. oryzae (strain MAFF 311018).